The primary structure comprises 434 residues: Methylenetetrahydrofolate--tRNA-(uracil-5-)-methyltransferase TrmFO (434 aa).

Residue 9–14 (GAGLAG) participates in FAD binding.

The protein belongs to the MnmG family. TrmFO subfamily. It depends on FAD as a cofactor.

The protein localises to the cytoplasm. It catalyses the reaction uridine(54) in tRNA + (6R)-5,10-methylene-5,6,7,8-tetrahydrofolate + NADH + H(+) = 5-methyluridine(54) in tRNA + (6S)-5,6,7,8-tetrahydrofolate + NAD(+). The enzyme catalyses uridine(54) in tRNA + (6R)-5,10-methylene-5,6,7,8-tetrahydrofolate + NADPH + H(+) = 5-methyluridine(54) in tRNA + (6S)-5,6,7,8-tetrahydrofolate + NADP(+). Functionally, catalyzes the folate-dependent formation of 5-methyl-uridine at position 54 (M-5-U54) in all tRNAs. This is Methylenetetrahydrofolate--tRNA-(uracil-5-)-methyltransferase TrmFO from Bacillus pumilus (strain SAFR-032).